Reading from the N-terminus, the 273-residue chain is Ribosomal RNA small subunit methyltransferase A (273 aa).

Asn-18, Leu-20, Gly-45, Glu-66, Asp-91, and Asn-113 together coordinate S-adenosyl-L-methionine.

The protein belongs to the class I-like SAM-binding methyltransferase superfamily. rRNA adenine N(6)-methyltransferase family. RsmA subfamily.

Its subcellular location is the cytoplasm. The catalysed reaction is adenosine(1518)/adenosine(1519) in 16S rRNA + 4 S-adenosyl-L-methionine = N(6)-dimethyladenosine(1518)/N(6)-dimethyladenosine(1519) in 16S rRNA + 4 S-adenosyl-L-homocysteine + 4 H(+). Functionally, specifically dimethylates two adjacent adenosines (A1518 and A1519) in the loop of a conserved hairpin near the 3'-end of 16S rRNA in the 30S particle. May play a critical role in biogenesis of 30S subunits. The polypeptide is Ribosomal RNA small subunit methyltransferase A (Salmonella schwarzengrund (strain CVM19633)).